Reading from the N-terminus, the 228-residue chain is MLKVSCLFVLLCGLLVPSSAQQIPPEVSSQITDALTQGLLDGNFLSLLNAINLEGLLNTILDQVTGLLNILVGPLLGPSDAEIKLQDTRLLQLSLEFSPDSKGIDIWIPLELSVYLKLLILEPLTLYVRTDIRVQLRLESDEDGKYRLAFGHCSLLPRAIELQSGNPLSLPVNAVLGTIENALGNFITEDLGAGLCPTLNSLVSNLDLQLVNNLINLILDRANVDLSV.

Positions 1 to 20 (MLKVSCLFVLLCGLLVPSSA) are cleaved as a signal peptide. An intrachain disulfide couples cysteine 153 to cysteine 196.

It belongs to the BPI/LBP/Plunc superfamily. Plunc family. Monomer. No sign of N-X-[ST] acceptor site even though reported as N-glycosylated. In terms of tissue distribution, found in sweat (at protein level).

It is found in the secreted. Functionally, major protein in sweat, has surfactant properties. Has a role in temperature regulation by having a capacity to make hydrophobic surfaces wettable and so can function in promoting spreading and evaporation of sweat. The chain is Latherin (LATH) from Equus caballus (Horse).